A 129-amino-acid chain; its full sequence is Cytochrome c oxidase subunit 5B, mitochondrial (129 aa).

The N-terminal 31 residues, 1 to 31, are a transit peptide targeting the mitochondrion; that stretch reads MASRLLRGAGALAAQTLRARGPNGVAVVRSM. N6-acetyllysine is present on residues lysine 68 and lysine 86. Zn(2+) contacts are provided by cysteine 91, cysteine 93, cysteine 113, and cysteine 116. Residue lysine 121 is modified to N6-acetyllysine.

This sequence belongs to the cytochrome c oxidase subunit 5B family. Component of the cytochrome c oxidase (complex IV, CIV), a multisubunit enzyme composed of 14 subunits. The complex is composed of a catalytic core of 3 subunits MT-CO1, MT-CO2 and MT-CO3, encoded in the mitochondrial DNA, and 11 supernumerary subunits COX4I, COX5A, COX5B, COX6A, COX6B, COX6C, COX7A, COX7B, COX7C, COX8 and NDUFA4, which are encoded in the nuclear genome. The complex exists as a monomer or a dimer and forms supercomplexes (SCs) in the inner mitochondrial membrane with NADH-ubiquinone oxidoreductase (complex I, CI) and ubiquinol-cytochrome c oxidoreductase (cytochrome b-c1 complex, complex III, CIII), resulting in different assemblies (supercomplex SCI(1)III(2)IV(1) and megacomplex MCI(2)III(2)IV(2)).

The protein localises to the mitochondrion inner membrane. It participates in energy metabolism; oxidative phosphorylation. Its function is as follows. Component of the cytochrome c oxidase, the last enzyme in the mitochondrial electron transport chain which drives oxidative phosphorylation. The respiratory chain contains 3 multisubunit complexes succinate dehydrogenase (complex II, CII), ubiquinol-cytochrome c oxidoreductase (cytochrome b-c1 complex, complex III, CIII) and cytochrome c oxidase (complex IV, CIV), that cooperate to transfer electrons derived from NADH and succinate to molecular oxygen, creating an electrochemical gradient over the inner membrane that drives transmembrane transport and the ATP synthase. Cytochrome c oxidase is the component of the respiratory chain that catalyzes the reduction of oxygen to water. Electrons originating from reduced cytochrome c in the intermembrane space (IMS) are transferred via the dinuclear copper A center (CU(A)) of subunit 2 and heme A of subunit 1 to the active site in subunit 1, a binuclear center (BNC) formed by heme A3 and copper B (CU(B)). The BNC reduces molecular oxygen to 2 water molecules using 4 electrons from cytochrome c in the IMS and 4 protons from the mitochondrial matrix. In Sus scrofa (Pig), this protein is Cytochrome c oxidase subunit 5B, mitochondrial (COX5B).